The chain runs to 309 residues: MSVGFIGAGQLAFALAKGFTAAGVLAAHKIMASSPDMDQATVSALRKIGVNLTPHNKETVRHSDVLFLAVKPHIIPFILDEIGANIEDRHIVVSCAAGVTINSIEKKLTAFQPAPKVIRCMTNTPVVVREGVTVYATGTHAQVEDGRLVEQLMGSVGFCTEVEEDLIDAVTGLSGSGPAYAFTALDALADGGVKMGLPRRLAVRLGAQALLGAAKMLLDSEQHPSQLKDNVCSPGGATIHALHVLESGGFRSLLINAVEASCIRTRELQTMADQETISPAAIKKTVLDKVKLDSSAGASLSSDHVKPLP.

N-acetylserine is present on Ser-2. Residues 6–11 (IGAGQL) and Ser-34 contribute to the NADP(+) site. Positions 8, 10, 11, 34, 36, 56, 70, 71, and 97 each coordinate NADPH. NADP(+) is bound by residues Asn-56, 69–72 (AVKP), and 95–97 (CAA). Residue Glu-164 coordinates L-proline. Asn-230 contacts NADPH. Positions 237 and 238 each coordinate L-proline. 2 positions are modified to phosphoserine: Ser-278 and Ser-301.

It belongs to the pyrroline-5-carboxylate reductase family. In terms of assembly, homodecamer; composed of 5 homodimers. Interacts with LTO1. As to expression, highly expressed in osteoblasts and skin.

The protein resides in the mitochondrion. The enzyme catalyses L-proline + NADP(+) = (S)-1-pyrroline-5-carboxylate + NADPH + 2 H(+). The catalysed reaction is L-proline + NAD(+) = (S)-1-pyrroline-5-carboxylate + NADH + 2 H(+). It participates in amino-acid biosynthesis; L-proline biosynthesis; L-proline from L-glutamate 5-semialdehyde: step 1/1. Functionally, oxidoreductase that catalyzes the last step in proline biosynthesis, which corresponds to the reduction of pyrroline-5-carboxylate to L-proline using NAD(P)H. At physiologic concentrations, has higher specific activity in the presence of NADH. Involved in the cellular response to oxidative stress. The chain is Pyrroline-5-carboxylate reductase 1, mitochondrial from Mus musculus (Mouse).